We begin with the raw amino-acid sequence, 635 residues long: RING finger protein 207 (635 aa).

The RING-type zinc finger occupies 25–64 (CPLCHGQYERPCLLDCFHDFCTGCLRGRATDGRLSCPLCQ). The B box-type; atypical zinc finger occupies 93–145 (SEAVRCANCDLECSQQDAETTYFCNTCGQPLCARCREETHRARMFARHDIVAL). Zn(2+) contacts are provided by Cys98, Cys101, Cys127, and His132. Residues 422–460 (EHCRHYEDSYRGLQVEVQNLKDQVQELHRDLTKHHSLIK) adopt a coiled-coil conformation. The span at 553–562 (QVPVDEHAEH) shows a compositional bias: basic and acidic residues. The interval 553-635 (QVPVDEHAEH…SGSKGACYQA (83 aa)) is disordered. A compositionally biased stretch (polar residues) spans 589–598 (PNGSSWSLSS). Over residues 607 to 622 (NQDHLRPKLEAGDEGW) the composition is skewed to basic and acidic residues.

As to quaternary structure, interacts with the core-glycosylated, but not the fully glycosylated form of KCNH2/HERG. Interacts with DNAJA1 and HSPA8. Interacts (via the C-terminus) with HSPA1A; this interaction additively increases KCNH2 expression.

The protein resides in the cytoplasm. Its function is as follows. Plays a role in cardiac repolarization possibly by stabilizing membrane expression of the potassium channel KCNH2/HERG, or by assisting its synthesis, folding or export from the endoplasmic reticulum, in a heat shock protein-dependent manner. The sequence is that of RING finger protein 207 (Rnf207) from Mus musculus (Mouse).